We begin with the raw amino-acid sequence, 201 residues long: MMGRVPDGPTGLAALVPSVEEAQAMLPPRRLRLLLSIAAVVLTLDIVTKVLAVKFLLPGKSVSIIGDTVTWTLVRNSGAAFSMATGYTWVLTLIATGVVIGIFWMGRRLVSSWWALGLGMILGGAMGNLVDRFFRAPAPLRGHVVDFLSIGWWPVFNVADPSVVVGAILLVVLSIFGFDFDTVGRRKAEFDIAGQRKAEQR.

Transmembrane regions (helical) follow at residues 33-53 (LLLS…VLAV), 86-106 (GYTW…FWMG), and 110-130 (VSSW…GNLV). Catalysis depends on residues aspartate 146 and aspartate 160. Residues 158–178 (VADPSVVVGAILLVVLSIFGF) form a helical membrane-spanning segment.

The protein belongs to the peptidase A8 family.

It localises to the cell membrane. It catalyses the reaction Release of signal peptides from bacterial membrane prolipoproteins. Hydrolyzes -Xaa-Yaa-Zaa-|-(S,diacylglyceryl)Cys-, in which Xaa is hydrophobic (preferably Leu), and Yaa (Ala or Ser) and Zaa (Gly or Ala) have small, neutral side chains.. Its pathway is protein modification; lipoprotein biosynthesis (signal peptide cleavage). Its function is as follows. This protein specifically catalyzes the removal of signal peptides from prolipoproteins. This Mycobacterium leprae (strain Br4923) protein is Lipoprotein signal peptidase.